Consider the following 91-residue polypeptide: Small ribosomal subunit protein uS15c (91 aa).

The protein belongs to the universal ribosomal protein uS15 family. In terms of assembly, part of the 30S ribosomal subunit.

Its subcellular location is the plastid. The protein localises to the chloroplast. This is Small ribosomal subunit protein uS15c (rps15) from Cicer arietinum (Chickpea).